We begin with the raw amino-acid sequence, 283 residues long: Isochorismatase domain-containing protein 1 (283 aa).

It belongs to the isochorismatase family.

In Danio rerio (Zebrafish), this protein is Isochorismatase domain-containing protein 1 (isoc1).